Consider the following 231-residue polypeptide: Large ribosomal subunit protein uL1 (231 aa).

Belongs to the universal ribosomal protein uL1 family. Part of the 50S ribosomal subunit.

Binds directly to 23S rRNA. The L1 stalk is quite mobile in the ribosome, and is involved in E site tRNA release. Functionally, protein L1 is also a translational repressor protein, it controls the translation of the L11 operon by binding to its mRNA. This chain is Large ribosomal subunit protein uL1, found in Pseudomonas syringae pv. tomato (strain ATCC BAA-871 / DC3000).